A 57-amino-acid polypeptide reads, in one-letter code: UPF0434 protein Spea_1772 (57 aa).

Belongs to the UPF0434 family.

The sequence is that of UPF0434 protein Spea_1772 from Shewanella pealeana (strain ATCC 700345 / ANG-SQ1).